Consider the following 172-residue polypeptide: ATP synthase subunit b (172 aa).

The helical transmembrane segment at 11–30 (LIAQIINFVIVLWVLNRFAF) threads the bilayer.

This sequence belongs to the ATPase B chain family. F-type ATPases have 2 components, F(1) - the catalytic core - and F(0) - the membrane proton channel. F(1) has five subunits: alpha(3), beta(3), gamma(1), delta(1), epsilon(1). F(0) has three main subunits: a(1), b(2) and c(10-14). The alpha and beta chains form an alternating ring which encloses part of the gamma chain. F(1) is attached to F(0) by a central stalk formed by the gamma and epsilon chains, while a peripheral stalk is formed by the delta and b chains.

The protein localises to the cell inner membrane. Functionally, f(1)F(0) ATP synthase produces ATP from ADP in the presence of a proton or sodium gradient. F-type ATPases consist of two structural domains, F(1) containing the extramembraneous catalytic core and F(0) containing the membrane proton channel, linked together by a central stalk and a peripheral stalk. During catalysis, ATP synthesis in the catalytic domain of F(1) is coupled via a rotary mechanism of the central stalk subunits to proton translocation. Its function is as follows. Component of the F(0) channel, it forms part of the peripheral stalk, linking F(1) to F(0). The polypeptide is ATP synthase subunit b (Methylacidiphilum infernorum (isolate V4) (Methylokorus infernorum (strain V4))).